The primary structure comprises 430 residues: MTAYTPWTGFFSASVAQADPELDRVLRAELSRQQDQIELIASENIVSRAVLEAAGSVLTNKYAEGYPGKRYYGGCEEVDVAEELAIERAKALFGCSYVNVQPHSGAQANGAVMMALVKPGDTIMGMSLAAGGHLTHGAPPAQSGKWFNAVQYGVRLQDASIDFDEVATLAETHKPKLIIAGGSAYPRIIDFAKFREIADRVGALFMVDMAHFAGLVAAGLHPSPLPYADIVTTTTHKTLRGPRGGMVLSNNPDIGKKINSAVFPGLQGGPLMHIIAAKAVAFGEALRPEFKVYAQAVIDNAKALTDALAAGGLNIVSGGTDTHLALVDLRPKALTGNIVEKSLERANITTNKNGIPFDPEKPAITSGIRVGTPAGTTRGFGTAEFTEIGKLIVEVLDGLAANGEDNSQAEAAVREKVAVLCRRFPIYGGL.

Residues L128 and 132-134 (GHL) contribute to the (6S)-5,6,7,8-tetrahydrofolate site. The residue at position 237 (K237) is an N6-(pyridoxal phosphate)lysine.

Belongs to the SHMT family. Homodimer. Pyridoxal 5'-phosphate serves as cofactor.

The protein localises to the cytoplasm. It carries out the reaction (6R)-5,10-methylene-5,6,7,8-tetrahydrofolate + glycine + H2O = (6S)-5,6,7,8-tetrahydrofolate + L-serine. It functions in the pathway one-carbon metabolism; tetrahydrofolate interconversion. Its pathway is amino-acid biosynthesis; glycine biosynthesis; glycine from L-serine: step 1/1. Functionally, catalyzes the reversible interconversion of serine and glycine with tetrahydrofolate (THF) serving as the one-carbon carrier. This reaction serves as the major source of one-carbon groups required for the biosynthesis of purines, thymidylate, methionine, and other important biomolecules. Also exhibits THF-independent aldolase activity toward beta-hydroxyamino acids, producing glycine and aldehydes, via a retro-aldol mechanism. This is Serine hydroxymethyltransferase 2 from Rhodospirillum rubrum (strain ATCC 11170 / ATH 1.1.1 / DSM 467 / LMG 4362 / NCIMB 8255 / S1).